The sequence spans 726 residues: Dipeptidyl-peptidase 5 (726 aa).

A signal peptide spans 1–19 (MAAAKWLIASLAFASSGLA). 2 N-linked (GlcNAc...) asparagine glycosylation sites follow: Asn96 and Asn252. The disordered stretch occupies residues 269–291 (AEPINKRNGPRTPQGIEGASSSP). Ser558 acts as the Charge relay system in catalysis. N-linked (GlcNAc...) asparagine glycosylation is present at Asn605. Catalysis depends on charge relay system residues Asp641 and His673. The N-linked (GlcNAc...) asparagine glycan is linked to Asn699.

This sequence belongs to the peptidase S9C family.

It is found in the secreted. In Arthroderma benhamiae (Trichophyton mentagrophytes), this protein is Dipeptidyl-peptidase 5 (DPPV).